Here is a 436-residue protein sequence, read N- to C-terminus: Trigger factor (436 aa).

The 86-residue stretch at 163–248 (GDRVTLDFAG…VKEVAEGVLP (86 aa)) folds into the PPIase FKBP-type domain.

Belongs to the FKBP-type PPIase family. Tig subfamily.

Its subcellular location is the cytoplasm. It carries out the reaction [protein]-peptidylproline (omega=180) = [protein]-peptidylproline (omega=0). Functionally, involved in protein export. Acts as a chaperone by maintaining the newly synthesized protein in an open conformation. Functions as a peptidyl-prolyl cis-trans isomerase. The protein is Trigger factor of Bordetella petrii (strain ATCC BAA-461 / DSM 12804 / CCUG 43448).